The chain runs to 526 residues: Acid-sensing ion channel 1 (526 aa).

Residues 1–49 (MELKTEEEEVGGVQPVSIQAFASSSTLHGLAHIFSYERLSLKRALWALC) lie on the Cytoplasmic side of the membrane. Residues 50-66 (FLGSLAVLLCVCTERVQ) form a helical membrane-spanning segment. Topologically, residues 67 to 425 (YYFCYHHVTK…ETIEQKKAYE (359 aa)) are extracellular. Intrachain disulfides connect C93-C194, C172-C179, C290-C365, C308-C361, C312-C359, C321-C343, and C323-C335. 2 N-linked (GlcNAc...) asparagine glycosylation sites follow: N366 and N393. The chain crosses the membrane as a discontinuously helical span at residues 426 to 456 (IAGLLGDIGGQMGLFIGASILTVLELFDYAY). Positions 442–444 (GAS) match the GAS motif; ion selectivity filter motif. Topologically, residues 457–526 (EVIKHRLCRR…ARGTFEDFTC (70 aa)) are cytoplasmic. Phosphoserine is present on residues S477 and S497.

It belongs to the amiloride-sensitive sodium channel (TC 1.A.6) family. ASIC1 subfamily. In terms of assembly, homotrimer. Heterotrimer; with other ASIC proteins producing channel with different properties. Interacts with PICK1; regulates ASIC1 clustering in membranes. Interacts with STOM; alters heterotrimeric ASIC channels activity. In terms of processing, pH-gating could be regulated by serine proteases. Post-translationally, phosphorylation by PKA regulates interaction with PICK1 and subcellular localization. Phosphorylation by PKC may regulate the channel. Expressed in dorsal root ganglia and sciatic nerve (at protein level). Widely distributed throughout the brain. Expressed in olfactory bulb, neo and allocortical regions, dentate granule cells, pyramidal cells of CA1-CA3 subfields of the hippocampal formation, habenula, basolateral amygdaloid nuclei, and in the Purkinje and granule cells of the cerebellum. Diffusely detected over most other regions of the basal ganglia, including thalamic nuclei, substantia nigra, striatum and globus pallidus, hypothalamus, midbrain, pons, medulla and choroid plexus. In terms of tissue distribution, expressed only in dorsal root ganglion (DRG). As to expression, expressed exclusively in trigeminal ganglion and dorsal root ganglion.

It is found in the cell membrane. Its subcellular location is the postsynaptic cell membrane. The protein resides in the cell projection. The protein localises to the dendrite. The catalysed reaction is Na(+)(in) = Na(+)(out). It catalyses the reaction Li(+)(in) = Li(+)(out). It carries out the reaction K(+)(in) = K(+)(out). The enzyme catalyses Ca(2+)(in) = Ca(2+)(out). The catalysed reaction is H(+)(in) = H(+)(out). With respect to regulation, inhibited by the diuretic drug amiloride. External calcium is required to potentiate proton activation of ASIC1 at physiological concentrations, but at higher, non-physiological concentrations, it inhibits activation. Also potentiated by other multivalent cations like Mg(2+), Ba(2+). Activated by FMRFamide-related neuropeptides. Inhibited by anti-inflammatory drugs like salicylic acid. The spider venom psalmotoxin-1 specifically inhibits the ASIC1 homotrimer. The snake venom mambalgin-1, mambalgin-2 and mambalgin-3 inhibit the homotrimer of Asic1a (ASIC1 isoform 1). The snake venom mambalgin-1 and mambalgin-2 inhibit heterotrimers of Asic1a-Asic1b (ASIC1 isoform 1-ASIC1 isoform 3). Heterotrimer of Asic1a-Asic2a is inhibited by the snake venom mambalgin-1, mambalgin-2 and mambalgin-3. Heterotrimer of Asic1a-Asic2b is inhibited by the snake venom mambalgin-1 and mambalgin-2. The spider venom Pi-theraphotoxin-Hm3a inhibits the homotrimer of Asic1a (ASIC1 isoform 1). The spider venom Pi-theraphotoxin-Hm3a inhibits heterotrimers of Asic1a-Asic1b (ASIC1 isoform 1-ASIC1 isoform 3). The spider venom Pi-hexatoxin-Hi1a inhibits the ASIC1 homotrimer. Its activity is regulated as follows. Not inhibited by extracellular calcium. Its function is as follows. Forms voltage-independent, pH-gated trimeric sodium channels that act as postsynaptic excitatory receptors in the nervous system, playing a crucial role in regulating synaptic plasticity, learning, and memory. Upon extracellular pH drop this channel elicits transient, fast activating, and completely desensitizing inward currents. Displays high selectivity for sodium ions but can also permit the permeation of other cations. Regulates more or less directly intracellular calcium concentration and CaMKII phosphorylation, and thereby the density of dendritic spines. Modulates neuronal activity in the circuits underlying innate fear. In terms of biological role, permeable to other cations including calcium, lithium and potassium. PH activation and steady-state inactivation are shifted to more acidic values. Forms channels that are not permeable to calcium as it discrimates stronger between monovalent cations. Functionally, has no pH-gated sodium channel activity per se but can associate with other ASICs and regulate their pH-sensitivity. In Rattus norvegicus (Rat), this protein is Acid-sensing ion channel 1.